Reading from the N-terminus, the 790-residue chain is Valine--tRNA ligase (790 aa).

The 'HIGH' region motif lies at 40 to 50; that stretch reads PTVSGKMHMGH. The 'KMSKS' region signature appears at 521 to 525; the sequence is KMSKS. Residue Lys524 participates in ATP binding.

It belongs to the class-I aminoacyl-tRNA synthetase family. ValS type 2 subfamily.

The protein localises to the cytoplasm. The enzyme catalyses tRNA(Val) + L-valine + ATP = L-valyl-tRNA(Val) + AMP + diphosphate. Functionally, catalyzes the attachment of valine to tRNA(Val). As ValRS can inadvertently accommodate and process structurally similar amino acids such as threonine, to avoid such errors, it has a 'posttransfer' editing activity that hydrolyzes mischarged Thr-tRNA(Val) in a tRNA-dependent manner. The polypeptide is Valine--tRNA ligase (Thermoplasma volcanium (strain ATCC 51530 / DSM 4299 / JCM 9571 / NBRC 15438 / GSS1)).